Here is a 448-residue protein sequence, read N- to C-terminus: Deoxyguanosinetriphosphate triphosphohydrolase-like protein (448 aa).

An HD domain is found at R67–G260.

The protein belongs to the dGTPase family. Type 2 subfamily.

In Aliivibrio fischeri (strain MJ11) (Vibrio fischeri), this protein is Deoxyguanosinetriphosphate triphosphohydrolase-like protein.